The following is a 185-amino-acid chain: Ribosome-recycling factor (185 aa).

Belongs to the RRF family.

It localises to the cytoplasm. Functionally, responsible for the release of ribosomes from messenger RNA at the termination of protein biosynthesis. May increase the efficiency of translation by recycling ribosomes from one round of translation to another. The protein is Ribosome-recycling factor of Macrococcus caseolyticus (strain JCSC5402) (Macrococcoides caseolyticum).